We begin with the raw amino-acid sequence, 349 residues long: Methylthioribose-1-phosphate isomerase (349 aa).

Substrate-binding positions include 51-53 (RGA), arginine 94, and glutamine 199. Aspartate 240 functions as the Proton donor in the catalytic mechanism. 250 to 251 (NK) contacts substrate.

This sequence belongs to the eIF-2B alpha/beta/delta subunits family. MtnA subfamily. Homodimer.

The catalysed reaction is 5-(methylsulfanyl)-alpha-D-ribose 1-phosphate = 5-(methylsulfanyl)-D-ribulose 1-phosphate. Its pathway is amino-acid biosynthesis; L-methionine biosynthesis via salvage pathway; L-methionine from S-methyl-5-thio-alpha-D-ribose 1-phosphate: step 1/6. Catalyzes the interconversion of methylthioribose-1-phosphate (MTR-1-P) into methylthioribulose-1-phosphate (MTRu-1-P). In Bacillus cytotoxicus (strain DSM 22905 / CIP 110041 / 391-98 / NVH 391-98), this protein is Methylthioribose-1-phosphate isomerase.